The chain runs to 553 residues: Transcription factor GAMYB (553 aa).

Basic and acidic residues predominate over residues methionine 1–glutamine 17. A disordered region spans residues methionine 1–tryptophan 45. Residues serine 27 to proline 38 show a composition bias toward gly residues. HTH myb-type domains lie at glycine 37–leucine 89 and arginine 90–glutamine 144. 2 consecutive DNA-binding regions (H-T-H motif) follow at residues tryptophan 65–leucine 89 and tryptophan 117–isoleucine 140. The disordered stretch occupies residues proline 464–histidine 489.

In terms of assembly, interacts with MYBS1. Expressed in aleurone cells, inflorescence shoot apical region, stamen primordia, and tapetum cells of the anther. Expressed at low level in roots and vegetative shoots.

It localises to the nucleus. Transcriptional activator of gibberellin-dependent alpha-amylase expression in aleurone cells. Involved in pollen and floral organs development. May bind to the 5'-TAACAAA-3' box of alpha-amylase promoter. Required for anther development. Functions in parallel with UDT1 to regulate early anther development. Functions upstream of the transcription factor TDR and may positively regulate its transcription. Required for pollen development. Probably required for controlling tapetal cell size and promoting tapetal programmed cell death (PCD) during anther development. Required for exine and Ubisch body formation in anthers. Interacts with the DNA specific motifs of giberrellin-up-regulated genes of anthers and regulates their expression. Positively regulates the expression of the laurate hydroxylase CYP703A3, known to be essential for the development of pollen exine and anther epicuticular layer. Functions with MYBS1 to integrate diverse nutrient starvation and gibberellin (GA) signaling pathways during germination of grains. Sugar, nitrogen and phosphate starvation signals converge and interconnect with GA to promote the co-nuclear import of GAMYB and MYBS1, resulting in the expression of a large set of GA-inducible hydrolases, transporters and regulators that are essential for mobilization of nutrient reserves in the endosperm to support seedling growth. The protein is Transcription factor GAMYB of Oryza sativa subsp. japonica (Rice).